We begin with the raw amino-acid sequence, 57 residues long: Potassium channel toxin KTx1 (57 aa).

A signal peptide spans 1–13 (FLVLLLVSLMCYA). Residues 14–18 (EIAEG) constitute a propeptide that is removed on maturation. 3 disulfide bridges follow: C24/C37, C30/C42, and C36/C51.

It belongs to the scorpion calcin-like family. KTX subfamily. As to expression, expressed by the venom gland.

It localises to the secreted. In terms of biological role, this recombinant peptide inhibits voltage-gated potassium channels mKv1.3/KCNA3 (IC(50)=1.70 uM), mKv1.1/KCNA1 (10 uM inhibits 40% of currents) and hKv1.2/KCNA2 (10 uM inhibits 42% of currents). May also increase intracellular calcium release through the activation of nuclear inositol 1,4,5-trisphosphate receptors (ITPR) of cardiomyocytes, thereby causing an increase in the contraction frequency of these cells. The protein is Potassium channel toxin KTx1 of Isometrus maculatus (Lesser brown scorpion).